Consider the following 177-residue polypeptide: Large ribosomal subunit protein uL6 (177 aa).

This sequence belongs to the universal ribosomal protein uL6 family. In terms of assembly, part of the 50S ribosomal subunit.

In terms of biological role, this protein binds to the 23S rRNA, and is important in its secondary structure. It is located near the subunit interface in the base of the L7/L12 stalk, and near the tRNA binding site of the peptidyltransferase center. This is Large ribosomal subunit protein uL6 from Aliivibrio fischeri (strain MJ11) (Vibrio fischeri).